We begin with the raw amino-acid sequence, 131 residues long: Fumarate reductase subunit C (131 aa).

3 helical membrane passes run 30-50, 61-81, and 110-130; these read EGTA…LFAL, IGFL…AAAL, and IKGL…VALF.

It belongs to the FrdC family. Part of an enzyme complex containing four subunits: a flavoprotein (FrdA), an iron-sulfur protein (FrdB), and two hydrophobic anchor proteins (FrdC and FrdD).

It localises to the cell inner membrane. Its function is as follows. Two distinct, membrane-bound, FAD-containing enzymes are responsible for the catalysis of fumarate and succinate interconversion; fumarate reductase is used in anaerobic growth, and succinate dehydrogenase is used in aerobic growth. Anchors the catalytic components of the fumarate reductase complex to the cell inner membrane, binds quinones. This Klebsiella pneumoniae (strain 342) protein is Fumarate reductase subunit C.